The sequence spans 233 residues: Biosynthetic peptidoglycan transglycosylase (233 aa).

Residues 8–28 (LIALPVGIFIFFNAYVYGNII) form a helical membrane-spanning segment.

This sequence belongs to the glycosyltransferase 51 family.

The protein localises to the cell inner membrane. The enzyme catalyses [GlcNAc-(1-&gt;4)-Mur2Ac(oyl-L-Ala-gamma-D-Glu-L-Lys-D-Ala-D-Ala)](n)-di-trans,octa-cis-undecaprenyl diphosphate + beta-D-GlcNAc-(1-&gt;4)-Mur2Ac(oyl-L-Ala-gamma-D-Glu-L-Lys-D-Ala-D-Ala)-di-trans,octa-cis-undecaprenyl diphosphate = [GlcNAc-(1-&gt;4)-Mur2Ac(oyl-L-Ala-gamma-D-Glu-L-Lys-D-Ala-D-Ala)](n+1)-di-trans,octa-cis-undecaprenyl diphosphate + di-trans,octa-cis-undecaprenyl diphosphate + H(+). It participates in cell wall biogenesis; peptidoglycan biosynthesis. In terms of biological role, peptidoglycan polymerase that catalyzes glycan chain elongation from lipid-linked precursors. The protein is Biosynthetic peptidoglycan transglycosylase of Neisseria meningitidis serogroup C (strain 053442).